The sequence spans 305 residues: NAD kinase (305 aa).

The Proton acceptor role is filled by Asp76. NAD(+) contacts are provided by residues 76 to 77 (DG), 150 to 151 (ND), Arg161, and Asp180.

It belongs to the NAD kinase family. A divalent metal cation serves as cofactor.

It localises to the cytoplasm. It catalyses the reaction NAD(+) + ATP = ADP + NADP(+) + H(+). Involved in the regulation of the intracellular balance of NAD and NADP, and is a key enzyme in the biosynthesis of NADP. Catalyzes specifically the phosphorylation on 2'-hydroxyl of the adenosine moiety of NAD to yield NADP. In Treponema pallidum (strain Nichols), this protein is NAD kinase.